The sequence spans 495 residues: Putative aldehyde dehydrogenase AldA (495 aa).

212–218 (GKGSESG) contacts NAD(+). Active-site residues include E256 and C290.

The protein belongs to the aldehyde dehydrogenase family.

It carries out the reaction an aldehyde + NAD(+) + H2O = a carboxylate + NADH + 2 H(+). The sequence is that of Putative aldehyde dehydrogenase AldA (aldA) from Staphylococcus aureus (strain USA300).